Here is a 272-residue protein sequence, read N- to C-terminus: Shikimate dehydrogenase (NADP(+)) (272 aa).

Shikimate-binding positions include 14–16 (SKS) and T61. K65 functions as the Proton acceptor in the catalytic mechanism. Residue E77 participates in NADP(+) binding. Shikimate is bound by residues N86 and D102. Residues 126–130 (GAGGA), 149–154 (NRTVFR), and M213 contribute to the NADP(+) site. Y215 is a shikimate binding site. An NADP(+)-binding site is contributed by G237.

Belongs to the shikimate dehydrogenase family. In terms of assembly, homodimer.

It catalyses the reaction shikimate + NADP(+) = 3-dehydroshikimate + NADPH + H(+). The protein operates within metabolic intermediate biosynthesis; chorismate biosynthesis; chorismate from D-erythrose 4-phosphate and phosphoenolpyruvate: step 4/7. In terms of biological role, involved in the biosynthesis of the chorismate, which leads to the biosynthesis of aromatic amino acids. Catalyzes the reversible NADPH linked reduction of 3-dehydroshikimate (DHSA) to yield shikimate (SA). The sequence is that of Shikimate dehydrogenase (NADP(+)) from Escherichia coli O127:H6 (strain E2348/69 / EPEC).